The following is a 433-amino-acid chain: Dihydroorotase (433 aa).

Positions 63 and 65 each coordinate Zn(2+). Substrate is bound by residues 65–67 (HLR) and N97. D155, H182, and H235 together coordinate Zn(2+). Substrate is bound at residue N283. Position 310 (D310) interacts with Zn(2+). Residue D310 is part of the active site. A substrate-binding site is contributed by H314.

The protein belongs to the metallo-dependent hydrolases superfamily. DHOase family. Class I DHOase subfamily. It depends on Zn(2+) as a cofactor.

The enzyme catalyses (S)-dihydroorotate + H2O = N-carbamoyl-L-aspartate + H(+). It functions in the pathway pyrimidine metabolism; UMP biosynthesis via de novo pathway; (S)-dihydroorotate from bicarbonate: step 3/3. Its function is as follows. Catalyzes the reversible cyclization of carbamoyl aspartate to dihydroorotate. This is Dihydroorotase from Anaeromyxobacter dehalogenans (strain 2CP-C).